The primary structure comprises 134 residues: ATP synthase epsilon chain (134 aa).

Residues 94–104 are compositionally biased toward basic and acidic residues; the sequence is AKLAKSRAESH. A disordered region spans residues 94–115; that stretch reads AKLAKSRAESHLEEDDDNTDIN.

Belongs to the ATPase epsilon chain family. As to quaternary structure, F-type ATPases have 2 components, CF(1) - the catalytic core - and CF(0) - the membrane proton channel. CF(1) has five subunits: alpha(3), beta(3), gamma(1), delta(1), epsilon(1). CF(0) has three main subunits: a, b and c.

It localises to the cell membrane. Produces ATP from ADP in the presence of a proton gradient across the membrane. This Staphylococcus epidermidis (strain ATCC 35984 / DSM 28319 / BCRC 17069 / CCUG 31568 / BM 3577 / RP62A) protein is ATP synthase epsilon chain.